The chain runs to 300 residues: Homoserine kinase (300 aa).

82–92 serves as a coordination point for ATP; that stretch reads RPGSGLGSSAA.

It belongs to the GHMP kinase family. Homoserine kinase subfamily.

Its subcellular location is the cytoplasm. It catalyses the reaction L-homoserine + ATP = O-phospho-L-homoserine + ADP + H(+). The protein operates within amino-acid biosynthesis; L-threonine biosynthesis; L-threonine from L-aspartate: step 4/5. Catalyzes the ATP-dependent phosphorylation of L-homoserine to L-homoserine phosphate. The polypeptide is Homoserine kinase (Methanocella arvoryzae (strain DSM 22066 / NBRC 105507 / MRE50)).